A 295-amino-acid polypeptide reads, in one-letter code: Acetylglutamate kinase (295 aa).

Substrate contacts are provided by residues 66 to 67, Arg88, and Asn193; that span reads GG.

Belongs to the acetylglutamate kinase family. ArgB subfamily.

It localises to the cytoplasm. The catalysed reaction is N-acetyl-L-glutamate + ATP = N-acetyl-L-glutamyl 5-phosphate + ADP. It functions in the pathway amino-acid biosynthesis; L-arginine biosynthesis; N(2)-acetyl-L-ornithine from L-glutamate: step 2/4. Catalyzes the ATP-dependent phosphorylation of N-acetyl-L-glutamate. In Rhizobium rhizogenes (strain K84 / ATCC BAA-868) (Agrobacterium radiobacter), this protein is Acetylglutamate kinase.